Consider the following 34-residue polypeptide: Corticostatin-2 (34 aa).

Intrachain disulfides connect cysteine 3/cysteine 32, cysteine 5/cysteine 21, and cysteine 11/cysteine 31.

This sequence belongs to the alpha-defensin family.

It localises to the secreted. In terms of biological role, microbicidal activity and inhibits corticotropin (ACTH) stimulated corticosterone production. This Oryctolagus cuniculus (Rabbit) protein is Corticostatin-2.